Reading from the N-terminus, the 161-residue chain is MDDIYKAAVEQLTEEQKNEFKAAFDIFVLGAEDGCISTKELGKVMRMLGQNPTPEELQEMIDEVDEDGSGTVDFDEFLVMMVRCMKDDSKGKSEEELSDLFRMFDKNADGYIDLDELKIMLQATGETITEDDIEELMKDGDKNNDGRIDYDEFLEFMKGVE.

N-acetylmethionine is present on methionine 1. 4 EF-hand domains span residues 16-51 (QKNEFKAAFDIFVLGAEDGCISTKELGKVMRMLGQN), 52-87 (PTPEELQEMIDEVDEDGSGTVDFDEFLVMMVRCMKD), 92-127 (KSEEELSDLFRMFDKNADGYIDLDELKIMLQATGET), and 128-161 (ITEDDIEELMKDGDKNNDGRIDYDEFLEFMKGVE). Ca(2+)-binding residues include aspartate 65, aspartate 67, serine 69, threonine 71, and glutamate 76. Position 98 is a phosphoserine (serine 98). Ca(2+)-binding residues include aspartate 105, asparagine 107, aspartate 109, tyrosine 111, glutamate 116, aspartate 141, asparagine 143, aspartate 145, arginine 147, and glutamate 152.

It belongs to the troponin C family.

Its function is as follows. Troponin is the central regulatory protein of striated muscle contraction. Tn consists of three components: Tn-I which is the inhibitor of actomyosin ATPase, Tn-T which contains the binding site for tropomyosin and Tn-C. The binding of calcium to Tn-C abolishes the inhibitory action of Tn on actin filaments. This Homo sapiens (Human) protein is Troponin C, slow skeletal and cardiac muscles (TNNC1).